Consider the following 477-residue polypeptide: Multidrug resistance protein PmpM (477 aa).

Helical transmembrane passes span Leu-21–Val-41, Ala-56–Leu-76, Leu-104–Leu-124, Leu-133–Leu-153, Met-171–Gly-191, Gly-202–Val-222, Leu-253–Ile-273, Ile-286–Thr-306, Gly-326–Leu-346, Val-360–Leu-380, Met-398–Leu-418, and Leu-431–Ala-451.

The protein belongs to the multi antimicrobial extrusion (MATE) (TC 2.A.66.1) family.

Its subcellular location is the cell inner membrane. Multidrug efflux pump that functions as an H(+)/drug antiporter. Confers resistance to benzalkonium chloride, fluoroquinolones, ethidium bromide, acriflavine and tetraphenylphosphonium chloride. The chain is Multidrug resistance protein PmpM (pmpM) from Pseudomonas aeruginosa (strain ATCC 15692 / DSM 22644 / CIP 104116 / JCM 14847 / LMG 12228 / 1C / PRS 101 / PAO1).